A 248-amino-acid polypeptide reads, in one-letter code: Caffeoyl-CoA O-methyltransferase 3 (248 aa).

Lysine 22 contacts substrate. Residues threonine 64, glutamate 86, 88-89, serine 94, aspartate 112, and alanine 141 each bind S-adenosyl-L-methionine; that span reads GV. Aspartate 164 lines the substrate pocket. Aspartate 164 is a binding site for a divalent metal cation. Aspartate 166 lines the S-adenosyl-L-methionine pocket. Residues aspartate 190 and asparagine 191 each coordinate a divalent metal cation. Residue asparagine 195 coordinates substrate.

Belongs to the class I-like SAM-binding methyltransferase superfamily. Cation-dependent O-methyltransferase family. CCoAMT subfamily. It depends on a divalent metal cation as a cofactor. In terms of tissue distribution, mostly expressed in petal limbs and tubes, and, at low levels, in stems, roots and leaves.

The protein resides in the cytoplasm. Its subcellular location is the cytosol. It catalyses the reaction (E)-caffeoyl-CoA + S-adenosyl-L-methionine = (E)-feruloyl-CoA + S-adenosyl-L-homocysteine + H(+). It carries out the reaction (E)-5-hydroxyferuloyl-CoA + S-adenosyl-L-methionine = (E)-sinapoyl-CoA + S-adenosyl-L-homocysteine + H(+). The protein operates within aromatic compound metabolism; phenylpropanoid biosynthesis. Involved in the production of floral volatile phenylpropanoids in flowers of fragrant cultivars (e.g. cv. Mitchell and cv. V26) from cinnamic acid, a common precursor with the anthocyanin biosynthesis pathway involved in flower pigmentation. Methylates caffeoyl-CoA to feruloyl-CoA, also able to methylate 5-hydroxyferuloyl-CoA. In Petunia hybrida (Petunia), this protein is Caffeoyl-CoA O-methyltransferase 3.